The sequence spans 1227 residues: ATP-dependent helicase/nuclease subunit A (1227 aa).

The UvrD-like helicase ATP-binding domain occupies 3-477; the sequence is VKYTPDQARA…IIFAENFRSS (475 aa). 24-31 serves as a coordination point for ATP; the sequence is ASAGSGKT. In terms of domain architecture, UvrD-like helicase C-terminal spans 505-788; it reads GQLKFAAGYD…KLMTIHASKG (284 aa).

Belongs to the helicase family. AddA subfamily. As to quaternary structure, heterodimer of AddA and AddB/RexB. It depends on Mg(2+) as a cofactor.

It catalyses the reaction Couples ATP hydrolysis with the unwinding of duplex DNA by translocating in the 3'-5' direction.. The enzyme catalyses ATP + H2O = ADP + phosphate + H(+). Functionally, the heterodimer acts as both an ATP-dependent DNA helicase and an ATP-dependent, dual-direction single-stranded exonuclease. Recognizes the chi site generating a DNA molecule suitable for the initiation of homologous recombination. The AddA nuclease domain is required for chi fragment generation; this subunit has the helicase and 3' -&gt; 5' nuclease activities. The sequence is that of ATP-dependent helicase/nuclease subunit A from Lactobacillus delbrueckii subsp. bulgaricus (strain ATCC 11842 / DSM 20081 / BCRC 10696 / JCM 1002 / NBRC 13953 / NCIMB 11778 / NCTC 12712 / WDCM 00102 / Lb 14).